Consider the following 461-residue polypeptide: ATP synthase subunit beta (461 aa).

151–158 (GGAGVGKT) serves as a coordination point for ATP.

The protein belongs to the ATPase alpha/beta chains family. As to quaternary structure, F-type ATPases have 2 components, CF(1) - the catalytic core - and CF(0) - the membrane proton channel. CF(1) has five subunits: alpha(3), beta(3), gamma(1), delta(1), epsilon(1). CF(0) has three main subunits: a(1), b(2) and c(9-12). The alpha and beta chains form an alternating ring which encloses part of the gamma chain. CF(1) is attached to CF(0) by a central stalk formed by the gamma and epsilon chains, while a peripheral stalk is formed by the delta and b chains.

The protein resides in the cell inner membrane. The catalysed reaction is ATP + H2O + 4 H(+)(in) = ADP + phosphate + 5 H(+)(out). Produces ATP from ADP in the presence of a proton gradient across the membrane. The catalytic sites are hosted primarily by the beta subunits. The sequence is that of ATP synthase subunit beta from Pseudoalteromonas translucida (strain TAC 125).